The primary structure comprises 370 residues: MDVSMTTGIELTEELSVLNGLTEITRFAGVGTAVSETSYSQTELLDILDVEDPKIRSVFLNSAIDRRFLTLPPENPGGGRLAEPQGDLLDKHKKIAVDMGCRALEACLKSAGATLSDLRHLCCVTSTGFLTPGLSALIIREMGIDPHCSRSDIVGMGCNAGLNALNVVSGWSAAHPGELGVVLCSEACSAAYALDGTMRTAVVNSLFGDGSAALAVISGDGRVAGPRVLKFASYIITDAVDAMRYDWDRDQDRFSFFLDPQIPYVVGAHAEIVVDRLLSGTGLRRSDIGHWLVHSGGKKVVDAVVVNLGLSRHDVRHTTGVLRDYGNLSSGSFLFSYERLSEEDVTRPGDYGVLMTMGPGSTIEMALIQW.

Cysteine 158 is an active-site residue.

This sequence belongs to the thiolase-like superfamily. Chalcone/stilbene synthases family.

The enzyme catalyses 4 malonyl-CoA + 4 H(+) = (3,5-dihydroxyphenyl)acetyl-CoA + 4 CO2 + 3 CoA + H2O. Its pathway is antibiotic biosynthesis; vancomycin biosynthesis. Its function is as follows. Involved in the biosynthesis of the nonproteinogenic amino acid monomer (S)-3,5-dihydroxyphenylglycine (Dpg) responsible of the production of vancomycin and teicoplanin antibiotics. Catalyzes the Claisen condensation of four molecules of malonyl-CoA to yield 3,5-dihydroxyphenylacetyl-CoA (DPA-CoA) and three free coenzyme A (CoA). DpgA requires the presence of the dehydratases DpgB and DpgD to facilitate the aromatization of the DPA-S-DgpA or DPA-S-CoA intermediate. The protein is 3,5-dihydroxyphenylacetyl-CoA synthase (dpgA) of Amycolatopsis orientalis (Nocardia orientalis).